The primary structure comprises 379 residues: Quinolinate synthase (379 aa).

The iminosuccinate site is built by H60 and S81. Residue C126 participates in [4Fe-4S] cluster binding. Iminosuccinate contacts are provided by residues 152-154 (YAN) and S169. A [4Fe-4S] cluster-binding site is contributed by C213. Iminosuccinate is bound by residues 239–241 (HPE) and T256. C310 contacts [4Fe-4S] cluster.

This sequence belongs to the quinolinate synthase family. Type 1 subfamily. The cofactor is [4Fe-4S] cluster.

Its subcellular location is the cytoplasm. The enzyme catalyses iminosuccinate + dihydroxyacetone phosphate = quinolinate + phosphate + 2 H2O + H(+). It participates in cofactor biosynthesis; NAD(+) biosynthesis; quinolinate from iminoaspartate: step 1/1. In terms of biological role, catalyzes the condensation of iminoaspartate with dihydroxyacetone phosphate to form quinolinate. This is Quinolinate synthase from Herminiimonas arsenicoxydans.